Here is a 524-residue protein sequence, read N- to C-terminus: Ribonuclease Y (524 aa).

The helical transmembrane segment at 3–23 threads the bilayer; the sequence is IVINLFLLVPASIVFFAAGFF. The interval 96-127 is disordered; the sequence is QQREGQLKKQAQDNRDMERRLQDQRKENEQVQ. Basic and acidic residues predominate over residues 100-124; sequence GQLKKQAQDNRDMERRLQDQRKENE. The KH domain occupies 214 to 280; sequence ALSVVHIQTD…KLTLQKLLSE (67 aa). One can recognise an HD domain in the interval 340-432; the sequence is LLQHSREVAM…VDAANVISLS (93 aa).

It belongs to the RNase Y family.

It is found in the cell membrane. In terms of biological role, endoribonuclease that initiates mRNA decay. The polypeptide is Ribonuclease Y (Chlorobium phaeovibrioides (strain DSM 265 / 1930) (Prosthecochloris vibrioformis (strain DSM 265))).